The primary structure comprises 255 residues: Aliphatic sulfonates import ATP-binding protein SsuB (255 aa).

Positions 7–231 (IKEKAFVQEG…PRNRTTPDFQ (225 aa)) constitute an ABC transporter domain. An ATP-binding site is contributed by 39–46 (GPSGCGKS).

Belongs to the ABC transporter superfamily. Aliphatic sulfonates importer (TC 3.A.1.17.2) family. In terms of assembly, the complex is composed of two ATP-binding proteins (SsuB), two transmembrane proteins (SsuC) and a solute-binding protein (SsuA).

It is found in the cell membrane. The catalysed reaction is ATP + H2O + aliphatic sulfonate-[sulfonate-binding protein]Side 1 = ADP + phosphate + aliphatic sulfonateSide 2 + [sulfonate-binding protein]Side 1.. Its function is as follows. Part of the ABC transporter complex SsuABC involved in aliphatic sulfonates import. Responsible for energy coupling to the transport system. Is also involved in taurine transport. The protein is Aliphatic sulfonates import ATP-binding protein SsuB of Bacillus subtilis (strain 168).